A 250-amino-acid polypeptide reads, in one-letter code: Functional amyloid subunit FapC (250 aa).

A signal peptide spans Met-1–Ala-24. Residues Asn-62–Ile-95 form a FapC_R1 repeat. The segment at Thr-96 to Gln-126 is linker 1. A FapC_R2 repeat occupies Asn-127 to Ile-160. A linker 2 region spans residues Val-161–Val-199. One copy of the FapC_R3 repeat lies at Asn-200–Leu-233. The short motif at Cys-237–Cys-240 is the Cys-X-X-Cys element.

It belongs to the FapB/FapC family. As to quaternary structure, the major component of purified amyloid fibrils. Forms fibrils in vitro; in the presence of FapA the fibrils are about 50% wider. Interacts with FapA. Fibrillates in vitro; this is inhibited by FapA. Fibrils are resistant to boiling in 2% (weight/vol) SDS and require &gt;90% (vol/vol) formic acid to dissolve.

It localises to the fimbrium. The protein localises to the secreted. Its function is as follows. The major functional amyloid subunit in this bacterium. Intrinsically disordered in its monomeric state. Upon overexpression of the endogenous six-gene locus (fapA-fapF) in situ, cells form large clumps during liquid growth, make large amounts of biofilm and produce amyloid fibrils. Expression of the 6 gene operon in E.coli strain BL21(DE3) induces flocculation and biofilm formation with copious extracellular fibrils. The sequence is that of Functional amyloid subunit FapC from Pseudomonas fluorescens.